Reading from the N-terminus, the 108-residue chain is U-scoloptoxin(10)-Sm1a (108 aa).

Residues 1–24 (MNKQWLHFFSVLLLCYVIEETCSL) form the signal peptide.

The protein belongs to the scoloptoxin-10 family. Contains 3 disulfide bonds. As to expression, expressed by the venom gland.

It localises to the secreted. This is U-scoloptoxin(10)-Sm1a from Scolopendra morsitans (Tanzanian blue ringleg centipede).